A 122-amino-acid polypeptide reads, in one-letter code: MIQMQSRLDVADNTGARSVMCIKVLGGSKRRYAGIGDIIKVSVKDAAPRGRVKKGEVYSAVVVRTAKGVRRPDGSLVKFDSNAAVLLNNKLEPIGTRIFGPVTRELRGERFMKIVSLAPEVL.

It belongs to the universal ribosomal protein uL14 family. Part of the 50S ribosomal subunit. Forms a cluster with proteins L3 and L19. In the 70S ribosome, L14 and L19 interact and together make contacts with the 16S rRNA in bridges B5 and B8.

Functionally, binds to 23S rRNA. Forms part of two intersubunit bridges in the 70S ribosome. The polypeptide is Large ribosomal subunit protein uL14 (Methylobacillus flagellatus (strain ATCC 51484 / DSM 6875 / VKM B-1610 / KT)).